We begin with the raw amino-acid sequence, 715 residues long: ATP-binding cassette sub-family B member 10, mitochondrial (715 aa).

Residues Met-1 to Leu-82 constitute a mitochondrion transit peptide. The Mitochondrial matrix portion of the chain corresponds to Ala-83 to Arg-133. Residues Gly-134–Leu-157 traverse the membrane as a helical segment. The ABC transmembrane type-1 domain occupies Leu-136–Lys-422. Over Gly-158–Arg-178 the chain is Mitochondrial intermembrane. Residues Leu-179–Met-201 form a helical membrane-spanning segment. The Mitochondrial matrix segment spans residues Gln-202–Thr-252. Position 230 is an N6-acetyllysine (Lys-230). Residues Glu-253 to Val-275 form a helical membrane-spanning segment. At Ser-276–Ser-278 the chain is on the mitochondrial intermembrane side. Residues Leu-279 to Gly-298 form a helical membrane-spanning segment. Residues Arg-299–Ala-357 lie on the Mitochondrial matrix side of the membrane. Residues Leu-358–Lys-381 form a helical membrane-spanning segment. The Mitochondrial intermembrane segment spans residues Gly-382–Glu-395. A helical membrane pass occupies residues Leu-396–Tyr-417. Topologically, residues Ser-418 to Ala-715 are mitochondrial matrix. The ABC transporter domain occupies Leu-457–Asn-696. The ATP site is built by Gly-495, Gly-497, Lys-498, Ser-499, and Thr-500. Ser-499 lines the Mg(2+) pocket. At Cys-547 the chain carries S-glutathionyl cysteine. Residue Asp-623 coordinates Mg(2+).

Belongs to the ABC transporter superfamily. ABCB family. Mitochondrial peptide exporter (TC 3.A.1.212) subfamily. As to quaternary structure, homodimer or homooligomer. Interacts with PAAT; this interaction regulates ABCB10. Interacts with SLC25A37; this interaction stabilizes SLC25A37 and enhances the function of SLC25A37 to import mitochondrial iron during erythroid differentiation. Interacts with FECH; this interaction may allow the formation of the oligomeric complex with SLC25A37. Forms a complex with ABCB7 and FECH, where a dimeric FECH bridges ABCB7 and ABCB10 homodimers; this complex may be required for cellular iron homeostasis, mitochondrial function and heme biosynthesis. In terms of tissue distribution, expressed at particularly high levels in fetal liver, and erythroid tissues of embryos and adults. Found also in adult bone marrow, liver and kidney, and at lower levels in heart, brain and spleen.

It is found in the mitochondrion inner membrane. The enzyme catalyses biliverdin IXalpha(in) + ATP + H2O = biliverdin IXalpha(out) + ADP + phosphate + H(+). With respect to regulation, oxidized glutathione (GSSG) stimulates ATP hydrolysis without affecting ATP binding, whereas reduced glutathione (GSH) inhibits ATP binding and hydrolysis. Its function is as follows. ATP-dependent transporter located in the mitochondrial inner membrane that catalyzes the export of biliverdin from the mitochondrial matrix, and plays a crucial role in hemoglobin synthesis and antioxidative stress. Participates in the early step of the heme biosynthetic process during insertion of iron into protoporphyrin IX (PPIX). Involved in the stabilization of the iron transporter mitoferrin-1/SLC25A37. In addition may be involved in mitochondrial unfolded protein response (UPRmt) signaling pathway, although ABCB10 probably does not participate in peptide export from mitochondria. The polypeptide is ATP-binding cassette sub-family B member 10, mitochondrial (Mus musculus (Mouse)).